A 308-amino-acid polypeptide reads, in one-letter code: Glycine--tRNA ligase alpha subunit (308 aa).

The protein belongs to the class-II aminoacyl-tRNA synthetase family. In terms of assembly, tetramer of two alpha and two beta subunits.

It localises to the cytoplasm. It catalyses the reaction tRNA(Gly) + glycine + ATP = glycyl-tRNA(Gly) + AMP + diphosphate. The chain is Glycine--tRNA ligase alpha subunit from Polaromonas naphthalenivorans (strain CJ2).